The following is a 1158-amino-acid chain: Formin-C (1158 aa).

3 disordered regions span residues 8–29 (INGNEHRTSSTPQQPQQNPSVS), 417–523 (PNTS…LSCL), and 990–1052 (INNN…NNSQ). Positions 20 to 388 (QQPQQNPSVS…EYSQRKLEMI (369 aa)) constitute a GBD/FH3 domain. The span at 417–437 (PNTSDLFDSSTLEDTYDGNND) shows a compositional bias: polar residues. Low complexity predominate over residues 438–481 (TNSCTSISTSSTPIHISQPTTLIVPSTTPNHPPQQSQQTPPLQL). A coiled-coil region spans residues 479–515 (LQLQKEKEKEKEKEKEKEKEKEKEQQQQQQQSNKQST). Over residues 482 to 503 (QKEKEKEKEKEKEKEKEKEKEQ) the composition is skewed to basic and acidic residues. In terms of domain architecture, FH2 spans 601-998 (TKSPITPSKR…IINNNNNNNN (398 aa)). The 25-residue stretch at 1134 to 1158 (SDDPMAVIIEALKTGSPNDMVKRAF) folds into the DAD domain.

This sequence belongs to the formin homology family. Diaphanous subfamily. As to quaternary structure, interacts (via GBD/FH3 domain) with activated Rho-GTPases.

Its subcellular location is the cytoplasm. The protein localises to the cytosol. It is found in the cytoskeleton. In terms of biological role, formins play an important role in the nucleation of actin and the formation of linear actin filaments. This chain is Formin-C (forC), found in Dictyostelium discoideum (Social amoeba).